Here is a 310-residue protein sequence, read N- to C-terminus: Olfactory receptor 2A4 (310 aa).

Residues 1–24 (MGDNITSIREFLLLGFPVGPRIQM) lie on the Extracellular side of the membrane. Residue asparagine 4 is glycosylated (N-linked (GlcNAc...) asparagine). Residues 25–48 (LLFGLFSLFYVFTLLGNGTILGLI) traverse the membrane as a helical segment. The Cytoplasmic segment spans residues 49–56 (SLDSRLHA). A helical membrane pass occupies residues 57–78 (PMYFFLSHLAVVDIAYACNTVP). The Extracellular portion of the chain corresponds to 79–99 (RMLVNLLHPAKPISFAGRMMQ). A helical transmembrane segment spans residues 100-119 (TFLFSTFAVTECLLLVVMSY). The Cytoplasmic segment spans residues 120 to 138 (DLYVAICHPLRYLAIMTWR). The chain crosses the membrane as a helical span at residues 139 to 157 (VCITLAVTSWTTGVLLSLI). The Extracellular segment spans residues 158 to 194 (HLVLLLPLPFCRPQKIYHFFCEILAVLKLACADTHIN). Residues 195-218 (ENMVLAGAISGLVGPLSTIVVSYM) traverse the membrane as a helical segment. At 219 to 235 (CILCAILQIQSREVQRK) the chain is on the cytoplasmic side. The helical transmembrane segment at 236–258 (AFRTCFSHLCVIGLVYGTAIIMY) threads the bilayer. The Extracellular segment spans residues 259-271 (VGPRYGNPKEQKK). The chain crosses the membrane as a helical span at residues 272-291 (YLLLFHSLFNPMLNPLICSL). The Cytoplasmic portion of the chain corresponds to 292–310 (RNSEVKNTLKRVLGVERAL).

The protein belongs to the G-protein coupled receptor 1 family.

It is found in the cell membrane. Functionally, odorant receptor. The protein is Olfactory receptor 2A4 (OR2A4) of Homo sapiens (Human).